The following is a 278-amino-acid chain: Phosphatidylglycerol--prolipoprotein diacylglyceryl transferase (278 aa).

The next 4 membrane-spanning stretches (helical) occupy residues 17-37 (LAVR…ILLG), 57-77 (ALFY…VLFY), 89-109 (ILAI…VAIA), and 119-139 (LSWL…LGAG). Arg140 is an a 1,2-diacyl-sn-glycero-3-phospho-(1'-sn-glycerol) binding site. 3 helical membrane-spanning segments follow: residues 174-194 (QLYE…LYSA), 200-220 (GAVT…CEFF), and 233-253 (LGIS…IALL).

This sequence belongs to the Lgt family.

It is found in the cell inner membrane. The enzyme catalyses L-cysteinyl-[prolipoprotein] + a 1,2-diacyl-sn-glycero-3-phospho-(1'-sn-glycerol) = an S-1,2-diacyl-sn-glyceryl-L-cysteinyl-[prolipoprotein] + sn-glycerol 1-phosphate + H(+). It functions in the pathway protein modification; lipoprotein biosynthesis (diacylglyceryl transfer). Catalyzes the transfer of the diacylglyceryl group from phosphatidylglycerol to the sulfhydryl group of the N-terminal cysteine of a prolipoprotein, the first step in the formation of mature lipoproteins. The chain is Phosphatidylglycerol--prolipoprotein diacylglyceryl transferase from Nitrosomonas europaea (strain ATCC 19718 / CIP 103999 / KCTC 2705 / NBRC 14298).